A 365-amino-acid polypeptide reads, in one-letter code: Protein RecA (365 aa).

ATP is bound at residue Gly77 to Thr84.

It belongs to the RecA family.

It is found in the cytoplasm. Can catalyze the hydrolysis of ATP in the presence of single-stranded DNA, the ATP-dependent uptake of single-stranded DNA by duplex DNA, and the ATP-dependent hybridization of homologous single-stranded DNAs. It interacts with LexA causing its activation and leading to its autocatalytic cleavage. The sequence is that of Protein RecA from Mesorhizobium japonicum (strain LMG 29417 / CECT 9101 / MAFF 303099) (Mesorhizobium loti (strain MAFF 303099)).